Here is a 335-residue protein sequence, read N- to C-terminus: Biotin synthase (335 aa).

The Radical SAM core domain occupies 41-269 (KQIQVCKLIS…TSDVRLSAGR (229 aa)). Residues cysteine 56, cysteine 60, and cysteine 63 each contribute to the [4Fe-4S] cluster site. Cysteine 100, cysteine 132, cysteine 192, and arginine 264 together coordinate [2Fe-2S] cluster.

It belongs to the radical SAM superfamily. Biotin synthase family. Homodimer. The cofactor is [4Fe-4S] cluster. It depends on [2Fe-2S] cluster as a cofactor.

It catalyses the reaction (4R,5S)-dethiobiotin + (sulfur carrier)-SH + 2 reduced [2Fe-2S]-[ferredoxin] + 2 S-adenosyl-L-methionine = (sulfur carrier)-H + biotin + 2 5'-deoxyadenosine + 2 L-methionine + 2 oxidized [2Fe-2S]-[ferredoxin]. The protein operates within cofactor biosynthesis; biotin biosynthesis; biotin from 7,8-diaminononanoate: step 2/2. Catalyzes the conversion of dethiobiotin (DTB) to biotin by the insertion of a sulfur atom into dethiobiotin via a radical-based mechanism. The sequence is that of Biotin synthase from Nostoc sp. (strain PCC 7120 / SAG 25.82 / UTEX 2576).